The primary structure comprises 267 residues: MAPAVDRKGYWGPTTSTLDWCEENYVVTLFVAEFWNTVSNLIMIIPPIFGAIQGIRDRLEKRYIAAYLALTVVGMGSWCFHMTLKYEMQLLDELPMIYSCCIFVYCMFECFKTKSSINYHLLFTLFLYSLTVTTIYLKVKEPIFHQVMYGMLVFTLVLRSIYIVTWVYPWLRGLGYTSLTVFLLGFLLWNIDNIFCDSLRNFRKRVPPVLGVTTQFHAWWHILTGLGSYLHILFSLYTRTLYLRYRPKVKFLFGIWPAVMFEPQRKH.

Residues 1-33 are Cytoplasmic-facing; the sequence is MAPAVDRKGYWGPTTSTLDWCEENYVVTLFVAE. 5 residues coordinate Ca(2+): Asp19, Trp20, Glu22, Asn24, and Glu33. A helical transmembrane segment spans residues 34–55; that stretch reads FWNTVSNLIMIIPPIFGAIQGI. The Lumenal portion of the chain corresponds to 56 to 61; sequence RDRLEK. The chain crosses the membrane as a helical span at residues 62-82; it reads RYIAAYLALTVVGMGSWCFHM. Position 81 (His81) interacts with Zn(2+). At 83–87 the chain is on the cytoplasmic side; it reads TLKYE. Residues 88–108 traverse the membrane as a helical segment; it reads MQLLDELPMIYSCCIFVYCMF. The Lumenal portion of the chain corresponds to 109–118; the sequence is ECFKTKSSIN. The chain crosses the membrane as a helical span at residues 119–139; that stretch reads YHLLFTLFLYSLTVTTIYLKV. The Cytoplasmic portion of the chain corresponds to 140–141; the sequence is KE. Residues 142 to 162 traverse the membrane as a helical segment; sequence PIFHQVMYGMLVFTLVLRSIY. At 163–173 the chain is on the lumenal side; the sequence is IVTWVYPWLRG. The chain crosses the membrane as a helical span at residues 174 to 194; that stretch reads LGYTSLTVFLLGFLLWNIDNI. Over 195 to 215 the chain is Cytoplasmic; sequence FCDSLRNFRKRVPPVLGVTTQ. A helical transmembrane segment spans residues 216 to 236; it reads FHAWWHILTGLGSYLHILFSL. Residues His217 and His221 each coordinate Zn(2+). The Lumenal portion of the chain corresponds to 237–267; it reads YTRTLYLRYRPKVKFLFGIWPAVMFEPQRKH.

It belongs to the alkaline ceramidase family. Zn(2+) serves as cofactor. In terms of tissue distribution, up-regulated with age in cerebeLlum and cerebrum.

It localises to the endoplasmic reticulum membrane. The protein localises to the golgi apparatus membrane. The catalysed reaction is an N-acyl-(4R)-4-hydroxysphinganine + H2O = (4R)-hydroxysphinganine + a fatty acid. It carries out the reaction N-(5Z,8Z,11Z,14Z-eicosatetraenoyl)-sphing-4-enine + H2O = sphing-4-enine + (5Z,8Z,11Z,14Z)-eicosatetraenoate. It catalyses the reaction N-(5Z,8Z,11Z,14Z-eicosatetraenoyl)-sphinganine + H2O = sphinganine + (5Z,8Z,11Z,14Z)-eicosatetraenoate. The enzyme catalyses N-(5Z,8Z,11Z,14Z-eicosatetraenoyl)-(4R)-hydroxysphinganine + H2O = (4R)-hydroxysphinganine + (5Z,8Z,11Z,14Z)-eicosatetraenoate. The catalysed reaction is N-(11Z-eicosenoyl)-sphing-4-enine + H2O = (11Z)-eicosenoate + sphing-4-enine. It carries out the reaction N-(11Z-eicosenoyl)-sphinganine + H2O = (11Z)-eicosenoate + sphinganine. It catalyses the reaction N-(11Z-eicosenoyl)-(4R)-hydroxysphinganine + H2O = (11Z)-eicosenoate + (4R)-hydroxysphinganine. The enzyme catalyses N-(9Z-octadecenoyl)-sphing-4-enine + H2O = sphing-4-enine + (9Z)-octadecenoate. The catalysed reaction is N-(9Z-octadecenoyl)-sphinganine + H2O = sphinganine + (9Z)-octadecenoate. It carries out the reaction N-(9Z-octadecenoyl)-(4R)-hydroxysphinganine + H2O = (4R)-hydroxysphinganine + (9Z)-octadecenoate. It catalyses the reaction an N-acylsphing-4-enine + H2O = sphing-4-enine + a fatty acid. The enzyme catalyses an N-acylsphinganine + H2O = sphinganine + a fatty acid. It functions in the pathway lipid metabolism; sphingolipid metabolism. With respect to regulation, activated by Ca(2+) and inhibited by Zn(2+). Endoplasmic reticulum and Golgi ceramidase that catalyzes the hydrolysis of unsaturated long-chain C18:1-, C20:1- and C20:4-ceramides, dihydroceramides and phytoceramides into sphingoid bases like sphingosine and free fatty acids at alkaline pH. Ceramides, sphingosine, and its phosphorylated form sphingosine-1-phosphate are bioactive lipids that mediate cellular signaling pathways regulating several biological processes including cell proliferation, apoptosis and differentiation. Controls the generation of sphingosine in erythrocytes, and thereby sphingosine-1-phosphate in plasma. Through the regulation of ceramides and sphingosine-1-phosphate homeostasis in the brain may play a role in neurons survival and function. By regulating the levels of pro-inflammatory ceramides in immune cells and tissues, may modulate the inflammatory response. In Mus musculus (Mouse), this protein is Alkaline ceramidase 3 (Acer3).